Here is a 266-residue protein sequence, read N- to C-terminus: Putative pyruvate, phosphate dikinase regulatory protein (266 aa).

Residue 149 to 156 participates in ADP binding; that stretch reads GVSRTSKT.

This sequence belongs to the pyruvate, phosphate/water dikinase regulatory protein family. PDRP subfamily.

The enzyme catalyses N(tele)-phospho-L-histidyl/L-threonyl-[pyruvate, phosphate dikinase] + ADP = N(tele)-phospho-L-histidyl/O-phospho-L-threonyl-[pyruvate, phosphate dikinase] + AMP + H(+). It catalyses the reaction N(tele)-phospho-L-histidyl/O-phospho-L-threonyl-[pyruvate, phosphate dikinase] + phosphate + H(+) = N(tele)-phospho-L-histidyl/L-threonyl-[pyruvate, phosphate dikinase] + diphosphate. Functionally, bifunctional serine/threonine kinase and phosphorylase involved in the regulation of the pyruvate, phosphate dikinase (PPDK) by catalyzing its phosphorylation/dephosphorylation. The polypeptide is Putative pyruvate, phosphate dikinase regulatory protein (Geobacillus sp. (strain WCH70)).